The primary structure comprises 171 residues: RxLR effector protein CRE7 (171 aa).

The first 23 residues, 1-23, serve as a signal peptide directing secretion; the sequence is MRAIAILLAVVATIFASLHGVSA. Positions 46 to 59 match the RxLR-dEER motif; sequence RRLRQTGDASDEER.

The protein belongs to the RxLR effector family.

Its subcellular location is the secreted. It is found in the host cell. In terms of biological role, effector that is involved in host plant infection. Contributes to virulence during the early infection stage, by inhibiting plant defense responses induced by both PAMP-triggered immunity (PTI) and effector-triggered immunity (ETI). The protein is RxLR effector protein CRE7 of Phytophthora infestans (strain T30-4) (Potato late blight agent).